The following is a 570-amino-acid chain: MFS-type transporter pigP (570 aa).

Positions 14–54 are disordered; that stretch reads GMIKKAHPEQTPPDVSHEGDVATEKGDSDGVEQAAPTGPTD. Residues 28 to 41 show a composition bias toward basic and acidic residues; the sequence is VSHEGDVATEKGDS. 7 helical membrane passes run 65-85, 99-119, 131-151, 162-182, 192-212, 221-241, and 263-283; these read VMIMSGITLVCFLMLLDTSII, LPDVGWYGSAYLLASASLVPL, WSFVSFFAVFELGSLLCGVAT, VAGMGGSGIQNGAFTIIAGCV, GLLMGFAQLGIVIGPLIGGAF, CFYINLPIGAVVGLLLFFVHI, and LVGFVLFAPAAVQFLLALQYG. Asparagine 290 is a glycosylation site (N-linked (GlcNAc...) asparagine). Transmembrane regions (helical) follow at residues 293-313, 336-356, 369-389, 392-412, 425-445, 455-475, and 533-553; these read VVIGLFCGAGATFVCFILWEW, VVYGFLMATLLVASYYLPIYF, VYILPSILSQSALAIISGALV, FGYYLPWSLAGGIVSSVGNGL, WIGYQILLGAGRGAGLQMPII, LIPVAMALIMFCQSFFGSTFL, and VFYLAVGAAVATFVFSCGMGW.

The protein belongs to the major facilitator superfamily. TCR/Tet family.

It localises to the cell membrane. Its function is as follows. MFS-type transporter; part of the gene cluster that mediates the biosynthesis of azaphilone pigments (MonAzPs), very widely used as food colorant. The polypeptide is MFS-type transporter pigP (Monascus ruber (Mold)).